A 210-amino-acid chain; its full sequence is Resolvase (210 aa).

The Resolvase/invertase-type recombinase catalytic domain occupies 6–150; it reads VARVYLRVSS…EDRRERQRQG (145 aa). S14 functions as the O-(5'-phospho-DNA)-serine intermediate in the catalytic mechanism. The H-T-H motif DNA-binding region spans 191 to 210; it reads GVSVSQVKRVWAQNQTKDKV.

Belongs to the site-specific recombinase resolvase family.

Site-specific recombination protein. This is Resolvase (stbA) from Pseudomonas syringae pv. tomato.